A 367-amino-acid chain; its full sequence is Ataxin-7-like protein 3 (367 aa).

Residues 84 to 105 (CVCPNCSRSIAASRFAPHLEKC) form an SGF11-type zinc finger. Low complexity predominate over residues 116–125 (ANRRIASSNN). A disordered region spans residues 116–184 (ANRRIASSNN…GELSGSVNPD (69 aa)). The segment covering 132–141 (DQEDNDDIND) has biased composition (acidic residues). In terms of domain architecture, SCA7 spans 199–266 (LGPEELRSIL…TMLENEAYEP (68 aa)). A compositionally biased stretch (low complexity) spans 280 to 299 (ASSDISPSDSASSKASTNNS). Positions 280–367 (ASSDISPSDS…PAPSIYDDLN (88 aa)) are disordered. Positions 318–329 (GERDKAQERDRI) are enriched in basic and acidic residues. A compositionally biased stretch (low complexity) spans 330 to 346 (AGSGSSGSSSQNALGLS).

This sequence belongs to the SGF11 family. As to quaternary structure, component of some SAGA transcription coactivator-HAT complexes. Within the SAGA complex, participates in a subcomplex of SAGA called the DUB module (deubiquitination module).

It localises to the nucleus. Functionally, component of the transcription regulatory histone acetylation (HAT) complex SAGA, a multiprotein complex that activates transcription by remodeling chromatin and mediating histone acetylation and deubiquitination. Within the SAGA complex, participates in a subcomplex that specifically deubiquitinates histone H2B. The SAGA complex is recruited to specific gene promoters by activators, where it is required for transcription. This is Ataxin-7-like protein 3 (atxn7l3) from Danio rerio (Zebrafish).